The chain runs to 335 residues: Geranylgeranyl pyrophosphate synthase BTS1 (335 aa).

The isopentenyl diphosphate site is built by K36, R39, and H68. 2 residues coordinate Mg(2+): D75 and D79. R84 contributes to the dimethylallyl diphosphate binding site. R85 is a binding site for isopentenyl diphosphate. Positions 169, 170, 206, 213, 223, and 233 each coordinate dimethylallyl diphosphate.

Belongs to the FPP/GGPP synthase family. The cofactor is Mg(2+).

It is found in the cytoplasm. It carries out the reaction isopentenyl diphosphate + dimethylallyl diphosphate = (2E)-geranyl diphosphate + diphosphate. The catalysed reaction is isopentenyl diphosphate + (2E)-geranyl diphosphate = (2E,6E)-farnesyl diphosphate + diphosphate. It catalyses the reaction isopentenyl diphosphate + (2E,6E)-farnesyl diphosphate = (2E,6E,10E)-geranylgeranyl diphosphate + diphosphate. It functions in the pathway isoprenoid biosynthesis; farnesyl diphosphate biosynthesis; farnesyl diphosphate from geranyl diphosphate and isopentenyl diphosphate: step 1/1. It participates in isoprenoid biosynthesis; geranyl diphosphate biosynthesis; geranyl diphosphate from dimethylallyl diphosphate and isopentenyl diphosphate: step 1/1. The protein operates within isoprenoid biosynthesis; geranylgeranyl diphosphate biosynthesis; geranylgeranyl diphosphate from farnesyl diphosphate and isopentenyl diphosphate: step 1/1. In terms of biological role, catalyzes the trans-addition of the 3 molecules of IPP onto DMAPP to form geranylgeranyl pyrophosphate. Required for the membrane attachment of YPT1 and SEC4. May be involved in vesicle trafficking and protein sorting. In Saccharomyces cerevisiae (strain ATCC 204508 / S288c) (Baker's yeast), this protein is Geranylgeranyl pyrophosphate synthase BTS1 (BTS1).